Reading from the N-terminus, the 751-residue chain is MDRILTKEEKQALISLLDLEPQYWGDYGRMQKCYKKKCLQLHPDKGGNEELMQQLNTLWTKLKDGLYRVRLLLGPSQDPNASTSTSRPGEFYNPDTGGYWSYSYGSAGYSDQQKKYWEEFFSKWDVNEDLTCQEELSSSEDEFTPWHPNPPPSPVSISSDSSSSSCDEEYPRNSSRKRKRVHANGSPNTPIQPNKRAHTPGGGRTTIRGDTDIPRTPARESQSTFGSYFNSTEELEEEISQTQQSHHNTTPKKPPPTVSPDDFPTILRGFLSHAIFSNKTQNAFIIYSTKEKCEVLYEQIDKYNPDYKGIFIMKQTEAFVMFMTPGKHRVAAVKSYCCKFCTVSFLLCKAVTKPLELYNCVAKCDDFQILKENKPGLYHFEFCDEKKEVKQIDWNFLTSFAVENELDDPLVIMGHYLEFSQCESSCKKCAEALPRMKVHWANHSQHLENAELFLHCKQQKSICQQAADNVLARRRLKVLESTRQELLAERLNKLLDQLKDLSPVDKHLYLAGVAWYQCMFPDFEMMLLDILKLFTENVPKKRNVLFRGPVNSGKTSLAAAIMNLVGGVALNVNCPADKLNFELGVAIDKFAVVFEDVKGQTGDKRHLQSGLGINNLDNLRDYLDGSVKVNLEKKHVNKRSQIFPPCIVTANEYFFPQTLYARFHKVYNFEVKDFLAKSLEENSYMGRHRVCQSPLTMLIALLWNVPTENFDKSLKEKVETEKKVLSDMCNFTTFAEMCLNIQRGADPLEAL.

The residue at position 1 (Met1) is an N-acetylmethionine; by host. The 64-residue stretch at 12–75 (ALISLLDLEP…LYRVRLLLGP (64 aa)) folds into the J domain. A binding to host RB1 protein and transforming activity region spans residues 130–134 (LTCQE). The segment covering 133-143 (QEELSSSEDEF) has biased composition (acidic residues). The segment at 133–260 (QEELSSSEDE…PKKPPPTVSP (128 aa)) is disordered. Residues 155–165 (VSISSDSSSSS) show a composition bias toward low complexity. Residues 219 to 232 (RESQSTFGSYFNST) show a composition bias toward polar residues. Ser245 is modified (phosphoserine; by host). Thr249 carries the phosphothreonine; by host modification. The Nuclear localization signal motif lies at 251–257 (PKKPPPT). Residues 264 to 380 (PTILRGFLSH…KENKPGLYHF (117 aa)) constitute a DNA-binding region (T-ag OBD). Residues 389–483 (VKQIDWNFLT…RRLKVLESTR (95 aa)) form a T-ag D1-type zinc finger. Zn(2+) is bound by residues Cys426, Cys429, His439, and His443. The SF3 helicase domain occupies 522 to 682 (DFEMMLLDIL…DFLAKSLEEN (161 aa)). 548-555 (GPVNSGKT) serves as a coordination point for ATP.

As to quaternary structure, forms homohexamers in the presence of ATP. Interacts with host HDAC1. Interacts (via LXCXE domain) with host RB1; the interaction induces the aberrant dissociation of RB1-E2F1 complex thereby disrupting RB1's activity. Interacts (via LXCXE domain) with host pRB-related proteins RBL1 and RBL2. Interacts (via C-terminus) with host TOP1 and POLA1 allowing DNA replication. Interacts with host preinitiation complex components TBP, TFIIA and TFIID to regulate transcription initiation. Mg(2+) serves as cofactor. In terms of processing, phosphorylated on both serine and threonine residues. Small t antigen inhibits the dephosphorylation by the AC form of PP2A. Post-translationally, O-Glycosylated near the C-terminal region. Acetylated by CBP in a TP53-dependent manner.

It localises to the host nucleus. The catalysed reaction is Couples ATP hydrolysis with the unwinding of duplex DNA by translocating in the 3'-5' direction.. It catalyses the reaction ATP + H2O = ADP + phosphate + H(+). Isoform large T antigen is a key early protein essential for both driving viral replication and inducing cellular transformation. Plays a role in viral genome replication by driving entry of quiescent cells into the cell cycle and by autoregulating the synthesis of viral early mRNA. Displays highly oncogenic activities by corrupting the host cellular checkpoint mechanisms that guard cell division and the transcription, replication, and repair of DNA. Participates in the modulation of cellular gene expression preceeding viral DNA replication. This step involves binding to host key cell cycle regulators retinoblastoma protein RB1/pRb and TP53. Induces the disassembly of host E2F1 transcription factors from RB1, thus promoting transcriptional activation of E2F1-regulated S-phase genes. Inhibits host TP53 binding to DNA, abrogating the ability of TP53 to stimulate gene expression. Plays the role of a TFIID-associated factor (TAF) in transcription initiation for all three RNA polymerases, by stabilizing the TBP-TFIIA complex on promoters. Initiates viral DNA replication and unwinding via interactions with the viral origin of replication. Binds two adjacent sites in the SV40 origin. The replication fork movement is facilitated by Large T antigen helicase activity. Has processive 3'-5' DNA helicase activity which requires a short 3' single-stranded region and ATP. Activates the transcription of viral late mRNA, through host TBP and TFIIA stabilization. Interferes with histone deacetylation mediated by HDAC1, leading to activation of transcription. The protein is Large T antigen of Mesocricetus auratus (Golden hamster).